The primary structure comprises 232 residues: U-scoloptoxin(11)-Sa3a (232 aa).

An N-terminal signal peptide occupies residues 1 to 21 (MFQFCLLILLLAPGRFFSALG).

This sequence belongs to the scoloptoxin-11 family. Post-translationally, contains 8 disulfide bonds. As to expression, expressed by the venom gland.

The protein localises to the secreted. The chain is U-scoloptoxin(11)-Sa3a from Scolopendra alternans (Florida Keys giant centipede).